A 298-amino-acid polypeptide reads, in one-letter code: Nucleotide-binding protein GK3066 (298 aa).

An ATP-binding site is contributed by 17–24; the sequence is GMSGAGKT. Residue 68–71 participates in GTP binding; sequence DLRS.

Belongs to the RapZ-like family.

Its function is as follows. Displays ATPase and GTPase activities. The sequence is that of Nucleotide-binding protein GK3066 from Geobacillus kaustophilus (strain HTA426).